The following is a 261-amino-acid chain: Cytochrome c oxidase subunit 3 (261 aa).

Over 1–15 the chain is Mitochondrial matrix; that stretch reads MAHQAHAYHMVDPSP. The helical transmembrane segment at 16-34 threads the bilayer; that stretch reads WPLTGAIAALLLTSGTAVW. The Mitochondrial intermembrane segment spans residues 35-40; the sequence is FHFHSL. The chain crosses the membrane as a helical span at residues 41–66; that stretch reads TLLTMGNILLLLTMYQWWRDIIREGT. The Mitochondrial matrix segment spans residues 67–72; sequence FQGHHT. A helical membrane pass occupies residues 73-105; that stretch reads PPVQKGLRYGMILFITSEVFFFLGFFWAFYHSS. The Mitochondrial intermembrane segment spans residues 106–128; sequence LSPTPELGGCWPPTGIITLDPFE. A helical transmembrane segment spans residues 129–152; it reads VPLLNTAVLLASGVTVTWAHHSIM. Residues 153–155 are Mitochondrial matrix-facing; the sequence is EGE. The helical transmembrane segment at 156-183 threads the bilayer; that stretch reads RKQTIQALTLTILLGFYFTFLQGMEYYE. The Mitochondrial intermembrane portion of the chain corresponds to 184–190; that stretch reads APFTIAD. A helical transmembrane segment spans residues 191-223; that stretch reads GVYGSTFFVATGFHGLHVIIGSTFLAICLLRQI. The Mitochondrial matrix segment spans residues 224-232; sequence QYHFTSEHH. Residues 233–256 form a helical membrane-spanning segment; that stretch reads FGFEAAAWYWHFVDVVWLFLYVSI. At 257 to 261 the chain is on the mitochondrial intermembrane side; sequence YWWGS.

It belongs to the cytochrome c oxidase subunit 3 family. Component of the cytochrome c oxidase (complex IV, CIV), a multisubunit enzyme composed of 14 subunits. The complex is composed of a catalytic core of 3 subunits MT-CO1, MT-CO2 and MT-CO3, encoded in the mitochondrial DNA, and 11 supernumerary subunits COX4I, COX5A, COX5B, COX6A, COX6B, COX6C, COX7A, COX7B, COX7C, COX8 and NDUFA4, which are encoded in the nuclear genome. The complex exists as a monomer or a dimer and forms supercomplexes (SCs) in the inner mitochondrial membrane with NADH-ubiquinone oxidoreductase (complex I, CI) and ubiquinol-cytochrome c oxidoreductase (cytochrome b-c1 complex, complex III, CIII), resulting in different assemblies (supercomplex SCI(1)III(2)IV(1) and megacomplex MCI(2)III(2)IV(2)).

It is found in the mitochondrion inner membrane. It catalyses the reaction 4 Fe(II)-[cytochrome c] + O2 + 8 H(+)(in) = 4 Fe(III)-[cytochrome c] + 2 H2O + 4 H(+)(out). In terms of biological role, component of the cytochrome c oxidase, the last enzyme in the mitochondrial electron transport chain which drives oxidative phosphorylation. The respiratory chain contains 3 multisubunit complexes succinate dehydrogenase (complex II, CII), ubiquinol-cytochrome c oxidoreductase (cytochrome b-c1 complex, complex III, CIII) and cytochrome c oxidase (complex IV, CIV), that cooperate to transfer electrons derived from NADH and succinate to molecular oxygen, creating an electrochemical gradient over the inner membrane that drives transmembrane transport and the ATP synthase. Cytochrome c oxidase is the component of the respiratory chain that catalyzes the reduction of oxygen to water. Electrons originating from reduced cytochrome c in the intermembrane space (IMS) are transferred via the dinuclear copper A center (CU(A)) of subunit 2 and heme A of subunit 1 to the active site in subunit 1, a binuclear center (BNC) formed by heme A3 and copper B (CU(B)). The BNC reduces molecular oxygen to 2 water molecules using 4 electrons from cytochrome c in the IMS and 4 protons from the mitochondrial matrix. The protein is Cytochrome c oxidase subunit 3 (mt-co3) of Salmo salar (Atlantic salmon).